A 145-amino-acid chain; its full sequence is 3-hydroxyacyl-[acyl-carrier-protein] dehydratase FabZ (145 aa).

Residue histidine 49 is part of the active site.

It belongs to the thioester dehydratase family. FabZ subfamily.

The protein localises to the cytoplasm. The catalysed reaction is a (3R)-hydroxyacyl-[ACP] = a (2E)-enoyl-[ACP] + H2O. Its function is as follows. Involved in unsaturated fatty acids biosynthesis. Catalyzes the dehydration of short chain beta-hydroxyacyl-ACPs and long chain saturated and unsaturated beta-hydroxyacyl-ACPs. The sequence is that of 3-hydroxyacyl-[acyl-carrier-protein] dehydratase FabZ from Rickettsia peacockii (strain Rustic).